Consider the following 277-residue polypeptide: Large ribosomal subunit protein uL2 (277 aa).

Residues 227–277 (VMNPVDHPHGGGEGRTSGGRHPVTPWGVPTKGKKTRSKTKASDRLIMRRRK) form a disordered region. Positions 266–277 (KASDRLIMRRRK) are enriched in basic and acidic residues.

Belongs to the universal ribosomal protein uL2 family. As to quaternary structure, part of the 50S ribosomal subunit. Forms a bridge to the 30S subunit in the 70S ribosome.

Functionally, one of the primary rRNA binding proteins. Required for association of the 30S and 50S subunits to form the 70S ribosome, for tRNA binding and peptide bond formation. It has been suggested to have peptidyltransferase activity; this is somewhat controversial. Makes several contacts with the 16S rRNA in the 70S ribosome. The protein is Large ribosomal subunit protein uL2 of Magnetococcus marinus (strain ATCC BAA-1437 / JCM 17883 / MC-1).